The chain runs to 497 residues: Serine hydroxymethyltransferase (497 aa).

(6S)-5,6,7,8-tetrahydrofolate is bound by residues leucine 176 and 180–182 (GHL). Lysine 289 bears the N6-(pyridoxal phosphate)lysine mark.

Belongs to the SHMT family. As to quaternary structure, homodimer. Pyridoxal 5'-phosphate serves as cofactor.

Its subcellular location is the cytoplasm. It carries out the reaction (6R)-5,10-methylene-5,6,7,8-tetrahydrofolate + glycine + H2O = (6S)-5,6,7,8-tetrahydrofolate + L-serine. Its pathway is one-carbon metabolism; tetrahydrofolate interconversion. It participates in amino-acid biosynthesis; glycine biosynthesis; glycine from L-serine: step 1/1. In terms of biological role, catalyzes the reversible interconversion of serine and glycine with tetrahydrofolate (THF) serving as the one-carbon carrier. This reaction serves as the major source of one-carbon groups required for the biosynthesis of purines, thymidylate, methionine, and other important biomolecules. Also exhibits THF-independent aldolase activity toward beta-hydroxyamino acids, producing glycine and aldehydes, via a retro-aldol mechanism. In Chlamydia felis (strain Fe/C-56) (Chlamydophila felis), this protein is Serine hydroxymethyltransferase.